Here is a 720-residue protein sequence, read N- to C-terminus: 1,4-alpha-glucan branching enzyme GlgB 2 (720 aa).

The Nucleophile role is filled by Asp398. The Proton donor role is filled by Glu451.

It belongs to the glycosyl hydrolase 13 family. GlgB subfamily. In terms of assembly, monomer.

The catalysed reaction is Transfers a segment of a (1-&gt;4)-alpha-D-glucan chain to a primary hydroxy group in a similar glucan chain.. The protein operates within glycan biosynthesis; glycogen biosynthesis. Its function is as follows. Catalyzes the formation of the alpha-1,6-glucosidic linkages in glycogen by scission of a 1,4-alpha-linked oligosaccharide from growing alpha-1,4-glucan chains and the subsequent attachment of the oligosaccharide to the alpha-1,6 position. This Xanthomonas oryzae pv. oryzae (strain KACC10331 / KXO85) protein is 1,4-alpha-glucan branching enzyme GlgB 2.